Reading from the N-terminus, the 339-residue chain is DNA double-strand break repair nuclease NurA (339 aa).

Mn(2+)-binding residues include D58 and D133.

This sequence belongs to the NurA family. In terms of assembly, homodimer. Forms a complex with HerA. The cofactor is Mn(2+).

Its activity is regulated as follows. Nuclease activity requires the presence of HerA. Another report shows endo- and exonuclease activity in the absence of HerA; HerA stimulates the exo- but not endonuclease. LhrC-Core (Hel112) inhibits the exonuclease activity of the HerA-NurA complex on ss- and dsDNA, has no effect on the nicking activity of NurA. Endo- and exonuclease activities are inhibited by ATP; ATP may subtract divalent ions from the reaction preventing nuclease activity, HerA can alleviate ATP inhibition. Its function is as follows. Involved in DNA double-strand break (DSB) repair. Probably acts with HerA to stimulate resection of the 5' strand and produce the long 3' single-strand that is required for RadA loading. NurA and HerA together stimulate the end-resection of six nucleotides of a linear DNA substrate. Processes linear double-stranded (ds)DNA probes with 3' or 5' single-stranded overhangs or blunt ends. Has endonuclease activity on single-stranded (ss)DNA and nicking activity on dsDNA without HerA as well as 5'- and 3'-exonuclease activity on ssDNA. Binds ssDNA, dsDNA, forked and bubble DNA equally well. The sequence is that of DNA double-strand break repair nuclease NurA from Saccharolobus solfataricus (strain ATCC 35092 / DSM 1617 / JCM 11322 / P2) (Sulfolobus solfataricus).